A 321-amino-acid chain; its full sequence is MRRIYPHRHLLGIEGLSRPEIVALLDAAESLFDVSRRSVRKVPTLRGKTVVNLFYEPSTRTRTSFELAGKRLSADVINISVSTSSAVKGESLLDTVQNLQAMQPDVLVIRHAASGAPHHVAAHTRAAVVNAGDGTHEHPTQALLDAFTIRRAKGRLEGLEVAICGDIVHSRVARSNAHLLTTMGARVRFAGPRTLLPIAGESLGATVYDRIEPALEGADVVMMLRVQRERLSGSFLPSTREYSRTFGLNPARLALAKPDAIVMHPGPMNRGVEIDPRVADGAQSVILDQVEAGVAVRMAVLWILAAEANEFSATGEPRPAP.

Residues Arg60 and Thr61 each coordinate carbamoyl phosphate. Lys88 contributes to the L-aspartate binding site. Positions 110, 138, and 141 each coordinate carbamoyl phosphate. L-aspartate is bound by residues Arg171 and Arg225. 2 residues coordinate carbamoyl phosphate: Gly266 and Pro267.

This sequence belongs to the aspartate/ornithine carbamoyltransferase superfamily. ATCase family. Heterododecamer (2C3:3R2) of six catalytic PyrB chains organized as two trimers (C3), and six regulatory PyrI chains organized as three dimers (R2).

The catalysed reaction is carbamoyl phosphate + L-aspartate = N-carbamoyl-L-aspartate + phosphate + H(+). Its pathway is pyrimidine metabolism; UMP biosynthesis via de novo pathway; (S)-dihydroorotate from bicarbonate: step 2/3. In terms of biological role, catalyzes the condensation of carbamoyl phosphate and aspartate to form carbamoyl aspartate and inorganic phosphate, the committed step in the de novo pyrimidine nucleotide biosynthesis pathway. In Sorangium cellulosum (strain So ce56) (Polyangium cellulosum (strain So ce56)), this protein is Aspartate carbamoyltransferase catalytic subunit.